We begin with the raw amino-acid sequence, 114 residues long: Kininogen-2 (114 aa).

An N-terminal signal peptide occupies residues Met1–Ala23. Residues Thr35–Arg45 show a composition bias toward basic residues. Residues Thr35–Gly114 form a disordered region. Residues Pro65–Lys80 show a composition bias toward basic and acidic residues. Arg113 bears the Arginine amide mark.

The protein belongs to the bradykinin-related peptide family. Expressed by the skin glands.

Its subcellular location is the secreted. Its function is as follows. Potent vasodilator. Binds B1 (BDKRB1) and B2 (BDKRB2) bradykinin receptors. This is Kininogen-2 from Bombina maxima (Giant fire-bellied toad).